A 620-amino-acid chain; its full sequence is 1-deoxy-D-xylulose-5-phosphate synthase (620 aa).

Residues His80 and 121 to 123 (GHS) contribute to the thiamine diphosphate site. Asp152 lines the Mg(2+) pocket. Residues 153-154 (GA), Asn181, Tyr288, and Glu370 contribute to the thiamine diphosphate site. Residue Asn181 coordinates Mg(2+).

The protein belongs to the transketolase family. DXPS subfamily. In terms of assembly, homodimer. Mg(2+) serves as cofactor. The cofactor is thiamine diphosphate.

The enzyme catalyses D-glyceraldehyde 3-phosphate + pyruvate + H(+) = 1-deoxy-D-xylulose 5-phosphate + CO2. The protein operates within metabolic intermediate biosynthesis; 1-deoxy-D-xylulose 5-phosphate biosynthesis; 1-deoxy-D-xylulose 5-phosphate from D-glyceraldehyde 3-phosphate and pyruvate: step 1/1. Catalyzes the acyloin condensation reaction between C atoms 2 and 3 of pyruvate and glyceraldehyde 3-phosphate to yield 1-deoxy-D-xylulose-5-phosphate (DXP). In Escherichia coli O139:H28 (strain E24377A / ETEC), this protein is 1-deoxy-D-xylulose-5-phosphate synthase.